The primary structure comprises 132 residues: MAVTPEDLRYTEEHEWVRRIGPTRVRVGITDYAQSQLGDVVYVQLPDEQREAAAGESIAEVESTKSVSDIYAPLAAKVVAVNEELSNAPETLNADPYGAGWLFELEVADAAALDVTLGELLDAAGYQGVIGG.

The Lipoyl-binding domain maps to 24 to 106; that stretch reads RVRVGITDYA…YGAGWLFELE (83 aa). Lysine 65 is subject to N6-lipoyllysine.

It belongs to the GcvH family. As to quaternary structure, the glycine cleavage system is composed of four proteins: P, T, L and H. (R)-lipoate serves as cofactor.

In terms of biological role, the glycine cleavage system catalyzes the degradation of glycine. The H protein shuttles the methylamine group of glycine from the P protein to the T protein. This chain is Glycine cleavage system H protein, found in Nocardia farcinica (strain IFM 10152).